The following is a 280-amino-acid chain: Urease accessory protein UreD 3 (280 aa).

This sequence belongs to the UreD family. In terms of assembly, ureD, UreF and UreG form a complex that acts as a GTP-hydrolysis-dependent molecular chaperone, activating the urease apoprotein by helping to assemble the nickel containing metallocenter of UreC. The UreE protein probably delivers the nickel.

The protein resides in the cytoplasm. Required for maturation of urease via the functional incorporation of the urease nickel metallocenter. The polypeptide is Urease accessory protein UreD 3 (Bradyrhizobium sp. (strain ORS 278)).